A 117-amino-acid chain; its full sequence is RutC family protein HD_0322 (117 aa).

Belongs to the RutC family.

The protein is RutC family protein HD_0322 of Haemophilus ducreyi (strain 35000HP / ATCC 700724).